We begin with the raw amino-acid sequence, 94 residues long: Co-chaperonin GroES (94 aa).

Belongs to the GroES chaperonin family. Heptamer of 7 subunits arranged in a ring. Interacts with the chaperonin GroEL.

The protein localises to the cytoplasm. Its function is as follows. Together with the chaperonin GroEL, plays an essential role in assisting protein folding. The GroEL-GroES system forms a nano-cage that allows encapsulation of the non-native substrate proteins and provides a physical environment optimized to promote and accelerate protein folding. GroES binds to the apical surface of the GroEL ring, thereby capping the opening of the GroEL channel. This chain is Co-chaperonin GroES, found in Geobacillus stearothermophilus (Bacillus stearothermophilus).